A 418-amino-acid chain; its full sequence is AP-3 complex subunit mu-1 (418 aa).

Residues 176 to 417 form the MHD domain; the sequence is NNEAYFDVVE…VTKAGKFQVR (242 aa).

It belongs to the adaptor complexes medium subunit family. Adaptor protein complex 3 (AP-3) is a heterotetramer composed of two large adaptins (delta-type subunit AP3D1 and beta-type subunit AP3B1 or AP3B2), a medium adaptin (mu-type subunit AP3M1 or AP3M2) and a small adaptin (sigma-type subunit APS1 or AP3S2). Interacts with AGAP1. AP-3 associates with the BLOC-1 complex.

The protein resides in the golgi apparatus. Its subcellular location is the cytoplasmic vesicle membrane. Part of the AP-3 complex, an adaptor-related complex which is not clathrin-associated. The complex is associated with the Golgi region as well as more peripheral structures. It facilitates the budding of vesicles from the Golgi membrane and may be directly involved in trafficking to lysosomes. In concert with the BLOC-1 complex, AP-3 is required to target cargos into vesicles assembled at cell bodies for delivery into neurites and nerve terminals. This chain is AP-3 complex subunit mu-1 (AP3M1), found in Bos taurus (Bovine).